Reading from the N-terminus, the 273-residue chain is Outer surface protein A (273 aa).

Residues Met1–Ala16 form the signal peptide. Cys17 carries the N-palmitoyl cysteine lipid modification. Residue Cys17 is the site of S-diacylglycerol cysteine attachment.

The protein belongs to the OspA lipoprotein family.

It localises to the cell outer membrane. It is found in the cell surface. The protein is Outer surface protein A of Borreliella burgdorferi (strain N40) (Borrelia burgdorferi).